The primary structure comprises 1154 residues: MLRRKIQTYLSRSHIRRGLCGLRFFQTQRLHTDYMPIEAYEPYKNELKSKIGKDFIIDLSYKSGTASLFEACVYNGDFLRSKQLLKSFIDHNKGDKILLPMINLYIREIIQRGSFELTDVLSNAKELLQQARLNGDSLTYALLCQASLNPTQRQLGLPVLHELIHNWRSANGKVIDILMHESVFSPEEVKLIMDQLNIPINNFTPSQLQLLGITNSTIVGESENGKDQNGDSSLKEKQPDVETTVTKSANLNALRSSLSSLLTESIDLPIDEVSLEFGNQGDTFNLARQKLLEKSAILSAAEVWKSEHESVLNRGNLQVPKNVSSLFYSWYVQLEQLFKEEISLIDDLALNESLDKKNDRLIYGPFLKLLSSKKLAALTIMEVAQLSTNPRYDRGARVTTLLGGLGRSFEREFLSEQIQRQEKNKSYKDKKRLKELFNDPRKFRQAVKNLRLSNTRDNIVLNPSVDSWPSAIVMKVGSVALCLLLSVAKIEVTAKDLSTGGILKQEVAAFVHTYQYSNGRKVGMIVPHVEFYKLLSRDIEKPHLHPQLLPMLVTPKPWTSWIDGGYYYSRQPLVRLKGALEQVDYLMKASENGQLDELFKAVSSLGKVSWRINQRLFNVLIRIWNSGEKFLSIPPREVKCDMPPYPKNSINPRDKVIWHTRRKELAALKTGAHSQRCDFNYKLEIARAFLNEKFYFPHSLDFRGRAYPLSSHLHHVSNDVCRGLLEFSTGKPLGPKGLNWLKVHLANLFGISKKDFATRQAFVDDNMQEVFDSADRPLDGNKWWSKADDPFQALAACFEIAEAVRSGDHESYISHIPIQQDGTCNGLQHYAALGGDIEGAKQVNLWPSDHPSDVYEAVAEIVRGFLKKDAEAGDEMANFLKDKVTRSVVKPTVMTNVYGVTYVGARKQISEKLENIDGMEKLKVADYANYLTKKVFEALRSLFTQAHEIQDWLSACCNLITHSLPADYIKEGIKDELTPVVWTTLLNLPIVQPYRNYKSRQIRTNLQTVFIEERDRTATVQPHKQATAFPPNFIHSLDATHMFMTCLKCSEQNINFAAVHDSYWTHACDVDQMNSLLREAFVLLHSNNIMERLKQEFEERYKGFLVSKKAIKANDEDLKAKFGNKSYIPLEFPPLPARGALDLKKVLESKYFFS.

Residues 1-30 (MLRRKIQTYLSRSHIRRGLCGLRFFQTQRL) constitute a mitochondrion transit peptide. The interval 221-243 (ESENGKDQNGDSSLKEKQPDVET) is disordered. Over residues 223–240 (ENGKDQNGDSSLKEKQPD) the composition is skewed to basic and acidic residues. Catalysis depends on residues D821, K890, and D1061.

It belongs to the phage and mitochondrial RNA polymerase family.

Its subcellular location is the mitochondrion. It carries out the reaction RNA(n) + a ribonucleoside 5'-triphosphate = RNA(n+1) + diphosphate. DNA-dependent RNA polymerase catalyzes the transcription of DNA into RNA using the four ribonucleoside triphosphates as substrates. Combines in the mitochondrion with mitochondrial transcription factor mtf1 as a holoenzyme to recognize and initiate transcription at the core mitochondrial promoters. In Schizosaccharomyces pombe (strain 972 / ATCC 24843) (Fission yeast), this protein is DNA-directed RNA polymerase, mitochondrial (rpo41).